A 235-amino-acid polypeptide reads, in one-letter code: MSERLPAFWAVIPAAGVGARMAADRPKQYLQLGGRTILEHSLGCFLDHPSLKGLVVSLAADDPYWPSLACAADPRIQRAEGGSERSGSVLNALLQLNALGAGDDDWVLVHDAARPNLSRDDLDKLLAELADDPVGGLLAVPARDTLKRVDKYGRVIETVDRSLIWQAYTPQMFRLGALHRALADSLVADAVITDEASAMEWSGQAPRLIEGRSDNIKVTRPEDLEWLRLRWANRR.

Belongs to the IspD/TarI cytidylyltransferase family. IspD subfamily.

It carries out the reaction 2-C-methyl-D-erythritol 4-phosphate + CTP + H(+) = 4-CDP-2-C-methyl-D-erythritol + diphosphate. It participates in isoprenoid biosynthesis; isopentenyl diphosphate biosynthesis via DXP pathway; isopentenyl diphosphate from 1-deoxy-D-xylulose 5-phosphate: step 2/6. In terms of biological role, catalyzes the formation of 4-diphosphocytidyl-2-C-methyl-D-erythritol from CTP and 2-C-methyl-D-erythritol 4-phosphate (MEP). The chain is 2-C-methyl-D-erythritol 4-phosphate cytidylyltransferase from Pseudomonas fluorescens (strain SBW25).